We begin with the raw amino-acid sequence, 445 residues long: MDTPPMPSLLWHKPGVAIDANIQTFLAADDVLLDREFFLYDITASTAHAQALQRIGLLTPDELDNILRELQHLTDEYRNGTFLLDTQYEDGHSAIESRLTERLGETGRKIHTGRSRNDQILVATRLWLKDRLTQLSTLNRDIAHHALQRAAAEQHLPMPGYTHLQRAVVSSAGMWWAGWAESFIDNAVRAADTHALIDCNPLGTAAGYGVNLPLDRPHTTAALGFARLQVNPICAQLSRGKFELAALEALGSATLDLRRIAWDLSLFTTSEFAFITLPPEYSTGSSIMPNKRNPDVIELMRATHASVAAARTEIEQLLSLPSGYHRDLQNSKGAIVRGFKRGLAALELLPALLSRLQWRPDTLRAAIDPGMYATDAAIEAAIAGIPFRDAYQMAAKTADTAAQGRTPETSLTARRSPGAAADLCLETLRARWHTLTQPTSDPDPR.

This sequence belongs to the lyase 1 family. Argininosuccinate lyase subfamily.

The protein localises to the cytoplasm. It carries out the reaction 2-(N(omega)-L-arginino)succinate = fumarate + L-arginine. It functions in the pathway amino-acid biosynthesis; L-arginine biosynthesis; L-arginine from L-ornithine and carbamoyl phosphate: step 3/3. This chain is Argininosuccinate lyase, found in Xylella fastidiosa (strain 9a5c).